A 582-amino-acid polypeptide reads, in one-letter code: Acylamino-acid-releasing enzyme (582 aa).

Catalysis depends on charge relay system residues Ser-445, Asp-524, and His-556.

The protein belongs to the peptidase S9C family.

The protein resides in the cytoplasm. It carries out the reaction Cleavage of an N-acetyl or N-formyl amino acid from the N-terminus of a polypeptide.. Its function is as follows. This enzyme catalyzes the hydrolysis of the N-terminal peptide bond of an N-acetylated peptide to generate an N-acetylated amino acid and a peptide with a free N-terminus. This Aeropyrum pernix (strain ATCC 700893 / DSM 11879 / JCM 9820 / NBRC 100138 / K1) protein is Acylamino-acid-releasing enzyme.